Here is a 203-residue protein sequence, read N- to C-terminus: Ribosome hibernation promotion factor (203 aa).

This sequence belongs to the HPF/YfiA ribosome-associated protein family. Long HPF subfamily. In terms of assembly, interacts with 100S ribosomes.

The protein localises to the cytoplasm. Required for dimerization of active 70S ribosomes into 100S ribosomes in stationary phase; 100S ribosomes are translationally inactive and sometimes present during exponential growth. This Bradyrhizobium diazoefficiens (strain JCM 10833 / BCRC 13528 / IAM 13628 / NBRC 14792 / USDA 110) protein is Ribosome hibernation promotion factor.